A 658-amino-acid chain; its full sequence is Glycogen debranching enzyme (658 aa).

Residue D336 is the Nucleophile of the active site. E371 serves as the catalytic Proton donor. A disordered region spans residues 459-484; the sequence is EANGEENRDGTNSNYSDNHGKEGLGG.

It belongs to the glycosyl hydrolase 13 family.

It carries out the reaction Hydrolysis of (1-&gt;6)-alpha-D-glucosidic linkages to branches with degrees of polymerization of three or four glucose residues in limit dextrin.. It functions in the pathway glycan degradation; glycogen degradation. Functionally, removes maltotriose and maltotetraose chains that are attached by 1,6-alpha-linkage to the limit dextrin main chain, generating a debranched limit dextrin. The chain is Glycogen debranching enzyme from Salmonella choleraesuis (strain SC-B67).